Consider the following 546-residue polypeptide: Membrane protein insertase YidC (546 aa).

Residues 6–26 (LILFIVFSFSLLLLWEAWQDK) traverse the membrane as a helical segment. Residues 31-56 (PATRPVAGAPAGSAAPTPSTALNAPA) form a disordered region. Over residues 37 to 56 (AGAPAGSAAPTPSTALNAPA) the composition is skewed to low complexity. 4 helical membrane-spanning segments follow: residues 351–371 (LVGN…LALY), 425–445 (LPIL…LAAV), 465–482 (WYIL…QVKL), and 494–514 (IMMI…AGLV).

This sequence belongs to the OXA1/ALB3/YidC family. Type 1 subfamily. In terms of assembly, interacts with the Sec translocase complex via SecD. Specifically interacts with transmembrane segments of nascent integral membrane proteins during membrane integration.

It is found in the cell inner membrane. Required for the insertion and/or proper folding and/or complex formation of integral membrane proteins into the membrane. Involved in integration of membrane proteins that insert both dependently and independently of the Sec translocase complex, as well as at least some lipoproteins. Aids folding of multispanning membrane proteins. The chain is Membrane protein insertase YidC from Thiobacillus denitrificans (strain ATCC 25259 / T1).